Here is a 29-residue protein sequence, read N- to C-terminus: Galanin (29 aa).

Ala-29 is modified (alanine amide).

Belongs to the galanin family.

It is found in the secreted. Its function is as follows. Contracts smooth muscle of the gastrointestinal and genitourinary tract, regulates growth hormone release, modulates insulin release, and may be involved in the control of adrenal secretion. The sequence is that of Galanin (gal) from Oncorhynchus mykiss (Rainbow trout).